The following is a 226-amino-acid chain: MNPIVINRLQRKLGYTFNHQELLQQALTHRSASSKHNERLEFLGDSILSFVIANALYHRFPRVDEGDMSRMRATLVRGNTLAELAREFDLGECLRLGPGELKSGGFRRESILADTMEALIGGVFLDSNIQTVEQLILNWYKTRLDEISPGDKQKDPKTRLQEYLQGRHLPLPSYLVVQVRGEAHDQEFTIHCQVSGLSEPVVGTGSSRRKAEQAAAEQVLKKLELE.

The RNase III domain maps to 6–128; it reads INRLQRKLGY…LIGGVFLDSN (123 aa). A Mg(2+)-binding site is contributed by Glu-41. Asp-45 is a catalytic residue. Mg(2+)-binding residues include Asp-114 and Glu-117. Glu-117 is an active-site residue. A DRBM domain is found at 155–225; sequence DPKTRLQEYL…AEQVLKKLEL (71 aa).

It belongs to the ribonuclease III family. Homodimer. It depends on Mg(2+) as a cofactor.

The protein resides in the cytoplasm. The enzyme catalyses Endonucleolytic cleavage to 5'-phosphomonoester.. Digests double-stranded RNA. Involved in the processing of primary rRNA transcript to yield the immediate precursors to the large and small rRNAs (23S and 16S). Processes some mRNAs, and tRNAs when they are encoded in the rRNA operon. Processes pre-crRNA and tracrRNA of type II CRISPR loci if present in the organism. This Salmonella choleraesuis (strain SC-B67) protein is Ribonuclease 3.